Here is a 259-residue protein sequence, read N- to C-terminus: 5'-nucleotidase SurE (259 aa).

Residues aspartate 11, aspartate 12, serine 42, and asparagine 99 each coordinate a divalent metal cation.

The protein belongs to the SurE nucleotidase family. A divalent metal cation is required as a cofactor.

It is found in the cytoplasm. It catalyses the reaction a ribonucleoside 5'-phosphate + H2O = a ribonucleoside + phosphate. Its function is as follows. Nucleotidase that shows phosphatase activity on nucleoside 5'-monophosphates. This chain is 5'-nucleotidase SurE, found in Cytophaga hutchinsonii (strain ATCC 33406 / DSM 1761 / CIP 103989 / NBRC 15051 / NCIMB 9469 / D465).